Consider the following 365-residue polypeptide: Caffeic acid 3-O-methyltransferase 1 (365 aa).

Methionine 130–leucine 136 provides a ligand contact to substrate. Residues alanine 162 to methionine 180 form a substrate binding region. S-adenosyl-L-methionine is bound by residues glycine 208, aspartate 231, aspartate 251, methionine 252, and lysine 265. Histidine 269 (proton acceptor) is an active-site residue.

It belongs to the class I-like SAM-binding methyltransferase superfamily. Cation-independent O-methyltransferase family. COMT subfamily. As to quaternary structure, homodimer. Post-translationally, the N-terminus is blocked. As to expression, xylem.

It carries out the reaction (E)-caffeate + S-adenosyl-L-methionine = (E)-ferulate + S-adenosyl-L-homocysteine + H(+). It functions in the pathway aromatic compound metabolism; phenylpropanoid biosynthesis. Functionally, catalyzes the conversion of caffeic acid to ferulic acid and of 5-hydroxyferulic acid to sinapic acid. The resulting products may subsequently be converted to the corresponding alcohols that are incorporated into lignins. The protein is Caffeic acid 3-O-methyltransferase 1 (OMT1) of Populus tremuloides (Quaking aspen).